The sequence spans 331 residues: Ketol-acid reductoisomerase (NADP(+)) (331 aa).

One can recognise a KARI N-terminal Rossmann domain in the interval 2-182; it reads AQLFYDSDAD…GGTRAGILET (181 aa). NADP(+) contacts are provided by residues 25 to 28, Ser51, Ser53, and 83 to 86; these read YGSQ and DEFQ. His108 is a catalytic residue. NADP(+) is bound at residue Gly134. In terms of domain architecture, KARI C-terminal knotted spans 183–328; it reads NFKEETETDL…KGLRSMFSWL (146 aa). Residues Asp191, Glu195, Glu227, and Glu231 each coordinate Mg(2+). Ser252 contacts substrate.

This sequence belongs to the ketol-acid reductoisomerase family. The cofactor is Mg(2+).

It catalyses the reaction (2R)-2,3-dihydroxy-3-methylbutanoate + NADP(+) = (2S)-2-acetolactate + NADPH + H(+). The enzyme catalyses (2R,3R)-2,3-dihydroxy-3-methylpentanoate + NADP(+) = (S)-2-ethyl-2-hydroxy-3-oxobutanoate + NADPH + H(+). The protein operates within amino-acid biosynthesis; L-isoleucine biosynthesis; L-isoleucine from 2-oxobutanoate: step 2/4. It functions in the pathway amino-acid biosynthesis; L-valine biosynthesis; L-valine from pyruvate: step 2/4. Involved in the biosynthesis of branched-chain amino acids (BCAA). Catalyzes an alkyl-migration followed by a ketol-acid reduction of (S)-2-acetolactate (S2AL) to yield (R)-2,3-dihydroxy-isovalerate. In the isomerase reaction, S2AL is rearranged via a Mg-dependent methyl migration to produce 3-hydroxy-3-methyl-2-ketobutyrate (HMKB). In the reductase reaction, this 2-ketoacid undergoes a metal-dependent reduction by NADPH to yield (R)-2,3-dihydroxy-isovalerate. The chain is Ketol-acid reductoisomerase (NADP(+)) from Synechococcus sp. (strain CC9902).